A 197-amino-acid polypeptide reads, in one-letter code: Class A basic helix-loop-helix protein 15 (197 aa).

Over residues 1–12 (MKTKNRPPRRRT) the composition is skewed to basic residues. Disordered stretches follow at residues 1–82 (MKTK…ERER) and 178–197 (QPQG…REGS). Threonine 12 and threonine 25 each carry phosphothreonine. A compositionally biased stretch (basic and acidic residues) spans 65-82 (GRRENSVQRRLESNERER). Residues 72–124 (QRRLESNERERQRMHKLNNAFQALREVIPHVRADKKLSKIETLTLAKNYIKSL) form the bHLH domain.

Forms homodimers or heterodimers with TCF3 gene products E12 and E47. These dimers bind to the E-box site, however, heterodimer with MYOD1 does not bind target DNA. As to expression, expressed in pancreatic tissue only in acinar cells. There is a complete absence of expression in intra- or interlobular pancreatic ducts and in all islet cells.

It localises to the nucleus. Functionally, plays a role in controlling the transcriptional activity of MyoD, ensuring that expanding myoblast populations remain undifferentiated. Repression may occur through muscle-specific E-box occupancy by homodimers. May also negatively regulate bHLH-mediated transcription through an N-terminal repressor domain. Serves as a key regulator of acinar cell function, stability, and identity. Also required for normal organelle localization in exocrine cells and for mitochondrial calcium ion transport. May function as a unique regulator of gene expression in several different embryonic and postnatal cell lineages. Binds to the E-box consensus sequence 5'-CANNTG-3'. The protein is Class A basic helix-loop-helix protein 15 (Bhlha15) of Mus musculus (Mouse).